Consider the following 951-residue polypeptide: Protein inturned (951 aa).

3 disordered regions span residues 1 to 32, 189 to 208, and 687 to 765; these read MEHSRGDSVEAGEEEEGRGGWDSRSAGTFSSS, SSRNSKRSERQGRQESNQRL, and TPKR…GGSG. The 83-residue stretch at 187-269 folds into the PDZ domain; sequence HQSSRNSKRS…PMQLKLTFET (83 aa). The segment covering 715–726 has biased composition (low complexity); that stretch reads PTRSSGGSDSGT. Over residues 743-752 the composition is skewed to basic and acidic residues; that stretch reads MARKFGRRES. The segment covering 754 to 765 has biased composition (gly residues); the sequence is GSGGSDGSGGSG.

The protein belongs to the inturned family. As to quaternary structure, interacts with fuz and wdpcp; fuz, intu and wdpcp probably form the core CPLANE (ciliogenesis and planar polarity effectors) complex. As to expression, expressed in the neural plate during neural tube closure with subsequent strong expression in the ventral neural tube and in facial mesenchyme.

It localises to the cell surface. The protein localises to the cell membrane. It is found in the cytoplasm. The protein resides in the cytoskeleton. Its subcellular location is the cilium basal body. Its function is as follows. Plays a role in the definition of cell polarity via the planar cell polarity (PCP) cascade. Required for ciliogenesis by controlling the organization of the apical actin cytoskeleton and the positioning of the basal bodies at the apical cell surface, which in turn is essential for the normal orientation of elongating ciliary microtubules. Proposed to function as core component of a functional module called CPLANE (ciliogenesis and planar polarity effectors) involved in recruitment of peripheral IFT-A proteins to basal bodies. Controls the localization of both rhoa and disheveled in multi-ciliated cells. Has an indirect effect on hedgehog signaling. The protein is Protein inturned of Xenopus laevis (African clawed frog).